The primary structure comprises 173 residues: Large ribosomal subunit protein uL10 (173 aa).

This sequence belongs to the universal ribosomal protein uL10 family. Part of the ribosomal stalk of the 50S ribosomal subunit. The N-terminus interacts with L11 and the large rRNA to form the base of the stalk. The C-terminus forms an elongated spine to which L12 dimers bind in a sequential fashion forming a multimeric L10(L12)X complex.

In terms of biological role, forms part of the ribosomal stalk, playing a central role in the interaction of the ribosome with GTP-bound translation factors. This is Large ribosomal subunit protein uL10 from Bifidobacterium adolescentis (strain ATCC 15703 / DSM 20083 / NCTC 11814 / E194a).